The primary structure comprises 93 residues: Large ribosomal subunit protein uL23c (93 aa).

The protein belongs to the universal ribosomal protein uL23 family. Part of the 50S ribosomal subunit.

The protein localises to the plastid. Its subcellular location is the chloroplast. In terms of biological role, binds to 23S rRNA. The chain is Large ribosomal subunit protein uL23c (rpl23) from Fragaria ananassa (Strawberry).